Here is a 241-residue protein sequence, read N- to C-terminus: NH(3)-dependent NAD(+) synthetase (241 aa).

27–34 (GISGGIDS) contacts ATP. Residue Asp33 participates in Mg(2+) binding. Residue Arg109 coordinates deamido-NAD(+). Thr129 is a binding site for ATP. A Mg(2+)-binding site is contributed by Glu134. Deamido-NAD(+) contacts are provided by Lys142 and Asp149. ATP-binding residues include Lys158 and Thr180. 231–232 (HK) is a binding site for deamido-NAD(+).

It belongs to the NAD synthetase family. In terms of assembly, homodimer.

The catalysed reaction is deamido-NAD(+) + NH4(+) + ATP = AMP + diphosphate + NAD(+) + H(+). The protein operates within cofactor biosynthesis; NAD(+) biosynthesis; NAD(+) from deamido-NAD(+) (ammonia route): step 1/1. Functionally, catalyzes the ATP-dependent amidation of deamido-NAD to form NAD. Uses ammonia as a nitrogen source. The polypeptide is NH(3)-dependent NAD(+) synthetase (Thermoplasma acidophilum (strain ATCC 25905 / DSM 1728 / JCM 9062 / NBRC 15155 / AMRC-C165)).